Reading from the N-terminus, the 420-residue chain is Dihydrolipoyllysine-residue succinyltransferase component of 2-oxoglutarate dehydrogenase complex (420 aa).

The Lipoyl-binding domain maps to 1 to 76 (MAEVKVPELA…EVGQAVAVVG (76 aa)). An N6-lipoyllysine modification is found at K42. The segment at 75–199 (VGEGQVNTSN…IREKMSRRKK (125 aa)) is disordered. The segment covering 81 to 90 (NTSNDSSNES) has biased composition (polar residues). Positions 91–102 (SQKDEAKEKETP) are enriched in basic and acidic residues. The span at 103–127 (KQSNPNSSESENTQDNSQQRINATP) shows a compositional bias: polar residues. A Peripheral subunit-binding (PSBD) domain is found at 124 to 160 (NATPSARRHARKNGVDLSEVSGKGNDVLRKDDVENSQ). The span at 149–158 (DVLRKDDVEN) shows a compositional bias: basic and acidic residues. Residues 159 to 174 (SQKSSSQTAKSESKSQ) show a composition bias toward low complexity. Over residues 175–186 (NSGSKQTNNNPS) the composition is skewed to polar residues. Active-site residues include H391 and D395.

It belongs to the 2-oxoacid dehydrogenase family. Forms a 24-polypeptide structural core with octahedral symmetry. Part of the 2-oxoglutarate dehydrogenase (OGDH) complex composed of E1 (2-oxoglutarate dehydrogenase), E2 (dihydrolipoamide succinyltransferase) and E3 (dihydrolipoamide dehydrogenase); the complex contains multiple copies of the three enzymatic components (E1, E2 and E3). The cofactor is (R)-lipoate.

It carries out the reaction N(6)-[(R)-dihydrolipoyl]-L-lysyl-[protein] + succinyl-CoA = N(6)-[(R)-S(8)-succinyldihydrolipoyl]-L-lysyl-[protein] + CoA. It participates in amino-acid degradation; L-lysine degradation via saccharopine pathway; glutaryl-CoA from L-lysine: step 6/6. Functionally, E2 component of the 2-oxoglutarate dehydrogenase (OGDH) complex which catalyzes the second step in the conversion of 2-oxoglutarate to succinyl-CoA and CO(2). The protein is Dihydrolipoyllysine-residue succinyltransferase component of 2-oxoglutarate dehydrogenase complex (odhB) of Staphylococcus epidermidis (strain ATCC 35984 / DSM 28319 / BCRC 17069 / CCUG 31568 / BM 3577 / RP62A).